Consider the following 614-residue polypeptide: Phosphomethylpyrimidine synthase (614 aa).

Residues Asn226, Met255, Tyr284, His320, 340-342 (SRG), 381-384 (DGLR), and Glu420 each bind substrate. His424 serves as a coordination point for Zn(2+). Tyr447 lines the substrate pocket. His488 serves as a coordination point for Zn(2+). Cys568, Cys571, and Cys576 together coordinate [4Fe-4S] cluster.

This sequence belongs to the ThiC family. Homodimer. It depends on [4Fe-4S] cluster as a cofactor.

The enzyme catalyses 5-amino-1-(5-phospho-beta-D-ribosyl)imidazole + S-adenosyl-L-methionine = 4-amino-2-methyl-5-(phosphooxymethyl)pyrimidine + CO + 5'-deoxyadenosine + formate + L-methionine + 3 H(+). It participates in cofactor biosynthesis; thiamine diphosphate biosynthesis. Its function is as follows. Catalyzes the synthesis of the hydroxymethylpyrimidine phosphate (HMP-P) moiety of thiamine from aminoimidazole ribotide (AIR) in a radical S-adenosyl-L-methionine (SAM)-dependent reaction. This is Phosphomethylpyrimidine synthase from Acidovorax ebreus (strain TPSY) (Diaphorobacter sp. (strain TPSY)).